Here is a 436-residue protein sequence, read N- to C-terminus: Na(+)/H(+) antiporter NhaA (436 aa).

Helical transmembrane passes span 31–51, 74–94, 112–132, 143–163, 173–193, 196–216, 222–242, 285–305, 315–335, 350–370, and 384–404; these read VGGALLLAATIAALIWANSPG, LSLGAWASDGLLAIFFFIAGL, IVPIAAAIGGVAVPAIIYTLI, GWAIPTATDIAFALAVLAVIS, FLLTLAVVDDLIAISIIAVFY, NLQPQYLALALIPLGLFTWAV, SWYLLLPLAIITWVLVHESGV, VAVPIFAFFSAGVAIGGWAGF, IGIIAALILGKAIGIFGATFL, WIDVLGLAILAGIGFTVSLLI, and HAKVAILTASLVAALLATVIL.

Belongs to the NhaA Na(+)/H(+) (TC 2.A.33) antiporter family.

It localises to the cell membrane. The enzyme catalyses Na(+)(in) + 2 H(+)(out) = Na(+)(out) + 2 H(+)(in). In terms of biological role, na(+)/H(+) antiporter that extrudes sodium in exchange for external protons. The protein is Na(+)/H(+) antiporter NhaA of Renibacterium salmoninarum (strain ATCC 33209 / DSM 20767 / JCM 11484 / NBRC 15589 / NCIMB 2235).